The following is a 291-amino-acid chain: N-acetylmannosamine kinase (291 aa).

Residues 5-12 (AIDIGGTK) and 132-139 (GVGGGVVS) contribute to the ATP site. Histidine 156, cysteine 166, cysteine 168, and cysteine 173 together coordinate Zn(2+).

It belongs to the ROK (NagC/XylR) family. NanK subfamily. In terms of assembly, homodimer.

The catalysed reaction is an N-acyl-D-mannosamine + ATP = an N-acyl-D-mannosamine 6-phosphate + ADP + H(+). It participates in amino-sugar metabolism; N-acetylneuraminate degradation; D-fructose 6-phosphate from N-acetylneuraminate: step 2/5. In terms of biological role, catalyzes the phosphorylation of N-acetylmannosamine (ManNAc) to ManNAc-6-P. The polypeptide is N-acetylmannosamine kinase (nanK1) (Escherichia coli O6:H1 (strain CFT073 / ATCC 700928 / UPEC)).